The following is a 193-amino-acid chain: Ion-translocating oxidoreductase complex subunit A (193 aa).

6 helical membrane passes run 5-25, 39-59, 62-82, 102-122, 134-154, and 171-191; these read LMLFIGTVLVNNFVLVKFLGL, LGMGMATTFVMTLASICAWLI, FILLPLNIPYLRTLAFIFIIA, LLGIFLPLITTNCAVLGVALL, ALYGFSAAVGFSLVMVLFAAI, and SIALITAGLMSLAFMGFTGLV.

This sequence belongs to the NqrDE/RnfAE family. As to quaternary structure, the complex is composed of six subunits: RnfA, RnfB, RnfC, RnfD, RnfE and RnfG.

The protein resides in the cell inner membrane. Its function is as follows. Part of a membrane-bound complex that couples electron transfer with translocation of ions across the membrane. This is Ion-translocating oxidoreductase complex subunit A from Sodalis glossinidius (strain morsitans).